The primary structure comprises 230 residues: Large ribosomal subunit protein uL1 (230 aa).

It belongs to the universal ribosomal protein uL1 family. As to quaternary structure, part of the 50S ribosomal subunit.

Functionally, binds directly to 23S rRNA. The L1 stalk is quite mobile in the ribosome, and is involved in E site tRNA release. In terms of biological role, protein L1 is also a translational repressor protein, it controls the translation of the L11 operon by binding to its mRNA. The chain is Large ribosomal subunit protein uL1 from Rhodopseudomonas palustris (strain BisB18).